The sequence spans 122 residues: Large ribosomal subunit protein uL14 (122 aa).

Belongs to the universal ribosomal protein uL14 family. As to quaternary structure, part of the 50S ribosomal subunit. Forms a cluster with proteins L3 and L19. In the 70S ribosome, L14 and L19 interact and together make contacts with the 16S rRNA in bridges B5 and B8.

Binds to 23S rRNA. Forms part of two intersubunit bridges in the 70S ribosome. The polypeptide is Large ribosomal subunit protein uL14 (Prosthecochloris aestuarii (strain DSM 271 / SK 413)).